The primary structure comprises 125 residues: Small ribosomal subunit protein uS13 (125 aa).

Residues 94–125 form a disordered region; sequence SLPVRGQRTQTNARTRKGKRKTVAGKKKAVKK. Residues 107–125 are compositionally biased toward basic residues; that stretch reads RTRKGKRKTVAGKKKAVKK.

This sequence belongs to the universal ribosomal protein uS13 family. As to quaternary structure, part of the 30S ribosomal subunit. Forms a loose heterodimer with protein S19. Forms two bridges to the 50S subunit in the 70S ribosome.

In terms of biological role, located at the top of the head of the 30S subunit, it contacts several helices of the 16S rRNA. In the 70S ribosome it contacts the 23S rRNA (bridge B1a) and protein L5 of the 50S subunit (bridge B1b), connecting the 2 subunits; these bridges are implicated in subunit movement. Contacts the tRNAs in the A and P-sites. This is Small ribosomal subunit protein uS13 from Prosthecochloris aestuarii (strain DSM 271 / SK 413).